The sequence spans 349 residues: Transmembrane protein 255A (349 aa).

Helical transmembrane passes span 30-50, 57-77, 89-109, and 226-246; these read IYVT…GLAA, VTVG…LGII, LVAS…CAIV, and TILN…LGGF. The tract at residues 303-329 is disordered; it reads PSSPPSGLSDEPQSASPSPSYMWSSSA. Positions 316–329 are enriched in low complexity; the sequence is SASPSPSYMWSSSA.

The protein belongs to the TMEM255 family.

The protein localises to the membrane. The protein is Transmembrane protein 255A (TMEM255A) of Homo sapiens (Human).